Here is a 250-residue protein sequence, read N- to C-terminus: Cytochrome c oxidase subunit 2 (250 aa).

At 1–39 (MFFLINKLVMNFDAPSPWGIYFQDSATPQMEGLNELHDN) the chain is on the mitochondrial intermembrane side. The chain crosses the membrane as a helical span at residues 40–60 (IMYYLVVILFAVGWILLSIVI). Residues 61 to 81 (NYVSTKSPISHKYLNHGTLIE) are Mitochondrial matrix-facing. A helical membrane pass occupies residues 82 to 104 (LIWTITPAVILILIAFPSFKLLY). Residues 105–250 (LMDEVSDPSM…EKFLIWLKEQ (146 aa)) are Mitochondrial intermembrane-facing. Residues histidine 185, cysteine 220, glutamate 222, cysteine 224, histidine 228, and methionine 231 each coordinate Cu cation. Mg(2+) is bound at residue glutamate 222.

This sequence belongs to the cytochrome c oxidase subunit 2 family. Component of the cytochrome c oxidase (complex IV, CIV), a multisubunit enzyme composed of a catalytic core of 3 subunits and several supernumerary subunits. The complex exists as a monomer or a dimer and forms supercomplexes (SCs) in the inner mitochondrial membrane with ubiquinol-cytochrome c oxidoreductase (cytochrome b-c1 complex, complex III, CIII). The cofactor is Cu cation.

It is found in the mitochondrion inner membrane. The enzyme catalyses 4 Fe(II)-[cytochrome c] + O2 + 8 H(+)(in) = 4 Fe(III)-[cytochrome c] + 2 H2O + 4 H(+)(out). Its function is as follows. Component of the cytochrome c oxidase, the last enzyme in the mitochondrial electron transport chain which drives oxidative phosphorylation. The respiratory chain contains 3 multisubunit complexes succinate dehydrogenase (complex II, CII), ubiquinol-cytochrome c oxidoreductase (cytochrome b-c1 complex, complex III, CIII) and cytochrome c oxidase (complex IV, CIV), that cooperate to transfer electrons derived from NADH and succinate to molecular oxygen, creating an electrochemical gradient over the inner membrane that drives transmembrane transport and the ATP synthase. Cytochrome c oxidase is the component of the respiratory chain that catalyzes the reduction of oxygen to water. Electrons originating from reduced cytochrome c in the intermembrane space (IMS) are transferred via the dinuclear copper A center (CU(A)) of subunit 2 and heme A of subunit 1 to the active site in subunit 1, a binuclear center (BNC) formed by heme A3 and copper B (CU(B)). The BNC reduces molecular oxygen to 2 water molecules using 4 electrons from cytochrome c in the IMS and 4 protons from the mitochondrial matrix. The sequence is that of Cytochrome c oxidase subunit 2 (COII) from Podospora anserina (strain S / ATCC MYA-4624 / DSM 980 / FGSC 10383) (Pleurage anserina).